The primary structure comprises 320 residues: Peroxidase 66 (320 aa).

A signal peptide spans 1 to 29; the sequence is MAASVSASCLNRLSSLAVVLVALASAASA. Residue Gln-30 is modified to Pyrrolidone carboxylic acid. Cystine bridges form between Cys-40-Cys-118, Cys-73-Cys-78, Cys-124-Cys-315, and Cys-202-Cys-227. His-71 (proton acceptor) is an active-site residue. Residues Asp-72, Val-75, Gly-77, Asp-79, and Ser-81 each contribute to the Ca(2+) site. N-linked (GlcNAc...) asparagine glycans are attached at residues Asn-85 and Asn-96. Substrate is bound at residue Pro-165. His-195 is a binding site for heme b. Position 196 (Thr-196) interacts with Ca(2+). Asn-211 is a glycosylation site (N-linked (GlcNAc...) asparagine). 3 residues coordinate Ca(2+): Asp-239, Thr-242, and Asp-247.

The protein belongs to the peroxidase family. Classical plant (class III) peroxidase subfamily. Requires heme b as cofactor. Ca(2+) serves as cofactor.

The protein localises to the secreted. The enzyme catalyses 2 a phenolic donor + H2O2 = 2 a phenolic radical donor + 2 H2O. Its function is as follows. Removal of H(2)O(2), oxidation of toxic reductants, biosynthesis and degradation of lignin, suberization, auxin catabolism, response to environmental stresses such as wounding, pathogen attack and oxidative stress. These functions might be dependent on each isozyme/isoform in each plant tissue. This chain is Peroxidase 66 (PER66), found in Zea mays (Maize).